We begin with the raw amino-acid sequence, 717 residues long: Glutamine--fructose-6-phosphate aminotransferase [isomerizing] (717 aa).

The For GATase activity role is filled by Cys2. One can recognise a Glutamine amidotransferase type-2 domain in the interval 2 to 318; it reads CGIFGYCNYL…DDDLAHIYDG (317 aa). Residue Ser253 is modified to Phosphoserine. Thr334 carries the phosphothreonine modification. Residue Ser336 is modified to Phosphoserine. SIS domains follow at residues 390-529 and 562-707; these read WLPV…DRVS and CATE…VDFP.

The enzyme catalyses D-fructose 6-phosphate + L-glutamine = D-glucosamine 6-phosphate + L-glutamate. It functions in the pathway nucleotide-sugar biosynthesis; UDP-N-acetyl-alpha-D-glucosamine biosynthesis; alpha-D-glucosamine 6-phosphate from D-fructose 6-phosphate: step 1/1. Involved in amino sugar synthesis (formation of chitin, supplies the amino sugars of asparagine-linked oligosaccharides of glycoproteins). This is Glutamine--fructose-6-phosphate aminotransferase [isomerizing] (GFA1) from Saccharomyces cerevisiae (strain ATCC 204508 / S288c) (Baker's yeast).